We begin with the raw amino-acid sequence, 380 residues long: 1-deoxy-D-xylulose 5-phosphate reductoisomerase (380 aa).

Residues Thr-10, Gly-11, Ser-12, Ile-13, Gly-35, Arg-36, Asn-37, and Asn-121 each coordinate NADPH. Lys-122 contacts 1-deoxy-D-xylulose 5-phosphate. Glu-123 lines the NADPH pocket. Asp-147 lines the Mn(2+) pocket. Residues Ser-148, Glu-149, Ser-173, and His-196 each coordinate 1-deoxy-D-xylulose 5-phosphate. Glu-149 is a Mn(2+) binding site. Gly-202 contributes to the NADPH binding site. Ser-209, Asn-214, Lys-215, and Glu-218 together coordinate 1-deoxy-D-xylulose 5-phosphate. Glu-218 is a binding site for Mn(2+).

Belongs to the DXR family. Mg(2+) serves as cofactor. Mn(2+) is required as a cofactor.

The catalysed reaction is 2-C-methyl-D-erythritol 4-phosphate + NADP(+) = 1-deoxy-D-xylulose 5-phosphate + NADPH + H(+). It participates in isoprenoid biosynthesis; isopentenyl diphosphate biosynthesis via DXP pathway; isopentenyl diphosphate from 1-deoxy-D-xylulose 5-phosphate: step 1/6. In terms of biological role, catalyzes the NADPH-dependent rearrangement and reduction of 1-deoxy-D-xylulose-5-phosphate (DXP) to 2-C-methyl-D-erythritol 4-phosphate (MEP). This Agathobacter rectalis (strain ATCC 33656 / DSM 3377 / JCM 17463 / KCTC 5835 / VPI 0990) (Eubacterium rectale) protein is 1-deoxy-D-xylulose 5-phosphate reductoisomerase.